The sequence spans 89 residues: Small ribosomal subunit protein uS15 (89 aa).

The protein belongs to the universal ribosomal protein uS15 family. Part of the 30S ribosomal subunit. Forms a bridge to the 50S subunit in the 70S ribosome, contacting the 23S rRNA.

Functionally, one of the primary rRNA binding proteins, it binds directly to 16S rRNA where it helps nucleate assembly of the platform of the 30S subunit by binding and bridging several RNA helices of the 16S rRNA. Forms an intersubunit bridge (bridge B4) with the 23S rRNA of the 50S subunit in the ribosome. This is Small ribosomal subunit protein uS15 from Micrococcus luteus (strain ATCC 4698 / DSM 20030 / JCM 1464 / CCM 169 / CCUG 5858 / IAM 1056 / NBRC 3333 / NCIMB 9278 / NCTC 2665 / VKM Ac-2230) (Micrococcus lysodeikticus).